A 330-amino-acid chain; its full sequence is DNA-directed RNA polymerase subunit alpha (330 aa).

Residues 1–231 form an alpha N-terminal domain (alpha-NTD) region; the sequence is MQTNLLKPKA…EQLAVFAQLE (231 aa). The tract at residues 250–330 is alpha C-terminal domain (alpha-CTD); the sequence is FDPILLRPVD…NWPPAGLDKR (81 aa).

Belongs to the RNA polymerase alpha chain family. As to quaternary structure, homodimer. The RNAP catalytic core consists of 2 alpha, 1 beta, 1 beta' and 1 omega subunit. When a sigma factor is associated with the core the holoenzyme is formed, which can initiate transcription.

The catalysed reaction is RNA(n) + a ribonucleoside 5'-triphosphate = RNA(n+1) + diphosphate. Its function is as follows. DNA-dependent RNA polymerase catalyzes the transcription of DNA into RNA using the four ribonucleoside triphosphates as substrates. This Acidovorax ebreus (strain TPSY) (Diaphorobacter sp. (strain TPSY)) protein is DNA-directed RNA polymerase subunit alpha.